Reading from the N-terminus, the 282-residue chain is MILIDGKSLSKDLKERLATQVQEYKHNTAITPKLVAIIVGNDPASKTYVASKEKACAQVGIDSQVITLPEHTTESELLELIDQLNNDSSVHAILVQLPLPAHINKNNVIYSIKPEKDVDGFHPTNVGRLQLRDKKCLESCTPKGIMTMLREYGIKTEGAYAVVVGASNVVGKPVSQLLLNAKATVTTCHRFTTDLKSHTTKADILIVAVGKPNFITADMVKEGAVVIDVGINHVDGKIVGDVDFAAVKDKVAAITPVPGGVGPMTITELLYNTFQCAQELNR.

Residues 165 to 167 (GAS) and I231 each bind NADP(+).

The protein belongs to the tetrahydrofolate dehydrogenase/cyclohydrolase family. Homodimer.

The catalysed reaction is (6R)-5,10-methylene-5,6,7,8-tetrahydrofolate + NADP(+) = (6R)-5,10-methenyltetrahydrofolate + NADPH. It carries out the reaction (6R)-5,10-methenyltetrahydrofolate + H2O = (6R)-10-formyltetrahydrofolate + H(+). It participates in one-carbon metabolism; tetrahydrofolate interconversion. Functionally, catalyzes the oxidation of 5,10-methylenetetrahydrofolate to 5,10-methenyltetrahydrofolate and then the hydrolysis of 5,10-methenyltetrahydrofolate to 10-formyltetrahydrofolate. The chain is Bifunctional protein FolD from Francisella tularensis subsp. novicida (strain U112).